A 342-amino-acid polypeptide reads, in one-letter code: Protein RecA (342 aa).

65 to 72 (GPESSGKT) lines the ATP pocket.

The protein belongs to the RecA family.

The protein resides in the cytoplasm. In terms of biological role, can catalyze the hydrolysis of ATP in the presence of single-stranded DNA, the ATP-dependent uptake of single-stranded DNA by duplex DNA, and the ATP-dependent hybridization of homologous single-stranded DNAs. It interacts with LexA causing its activation and leading to its autocatalytic cleavage. This is Protein RecA from Teredinibacter turnerae (strain ATCC 39867 / T7901).